We begin with the raw amino-acid sequence, 362 residues long: MNVHVKTADQTPSTVQAQDALAILSAWASEASADQIDALDPGIARLVRVQAYPDLRAEYPGDFTVDEAYRATLPDLQNGPASLIKGANRRIQHVGISNFRLPIRYAVQDGSEVMLETSVTGTVSLEADQKGINMSRIMRSFYKHADASFGFDVIEAALDDYKADLGSFDARIQMRLSYPMKVDSLRSGLSGWQYYDIALELVERGGVRQRIVHLDYVYSSTCPCSLELSEHARATRGQLATPHSQRSVARISVELQGQGVWFEDLIEMARSGVPTETQVMVKREDEQAFAELNAANPIFVEDAARLFAEQLQAHSGVGDFRVMASHQESLHSHDAVSLLTEGDTFAEVSLDPKLFPSLIHVG.

This sequence belongs to the GTP cyclohydrolase IV family.

It carries out the reaction GTP + H2O = 7,8-dihydroneopterin 3'-triphosphate + formate + H(+). Its pathway is cofactor biosynthesis; 7,8-dihydroneopterin triphosphate biosynthesis; 7,8-dihydroneopterin triphosphate from GTP: step 1/1. In terms of biological role, converts GTP to 7,8-dihydroneopterin triphosphate. The polypeptide is GTP cyclohydrolase FolE2 (Jannaschia sp. (strain CCS1)).